A 40-amino-acid chain; its full sequence is Amyloid-beta precursor protein (40 aa).

This sequence belongs to the APP family. In terms of assembly, binds, via its C-terminus, to the PID domain of several cytoplasmic proteins, including APBB family members, the APBA family, MAPK8IP1, SHC1 and NUMB and DAB1. Binding to DAB1 inhibits its serine phosphorylation. Interacts (via NPXY motif) with DAB2 (via PID domain); the interaction is impaired by tyrosine phosphorylation of the NPXY motif. Also interacts with GPCR-like protein BPP, APPBP1, IB1, KNS2 (via its TPR domains), APPBP2 (via BaSS) and DDB1. In vitro, it binds MAPT via the MT-binding domains. Associates with microtubules in the presence of ATP and in a kinesin-dependent manner. Interacts, through a C-terminal domain, with GNAO1. Interacts with CPEB1, ANKS1B and AGER. Interacts with ITM2B. Interacts with ITM2C. Interacts with IDE. Can form homodimers; dimerization is enhanced in the presence of Cu(2+) ions. Can form homodimers; this is promoted by heparin binding. Interacts with SORL1 (via N-terminal ectodomain); this interaction retains APP in the trans-Golgi network and reduces processing into soluble APP-alpha and amyloid-beta peptides. Interacts with PLD3. Interacts with VDAC1. Interacts with NSG1; could regulate APP processing. Interacts with LRRK2. Interacts (via cytoplasmic domain) with KIF5B. Interacts (via C-terminus) with APBB2/FE65L1 (via C-terminus). Interacts (via intracellular domain) with APBB3. Post-translationally, proteolytically processed under normal cellular conditions. Cleavage either by alpha-secretase, beta-secretase or theta-secretase leads to generation and extracellular release of soluble APP peptides, S-APP-alpha and S-APP-beta, and the retention of corresponding membrane-anchored C-terminal fragments, C80, C83 and C99. Subsequent processing of C80 and C83 by gamma-secretase yields P3 peptides. This is the major secretory pathway and is non-amyloidogenic. Alternatively, presenilin/nicastrin-mediated gamma-secretase processing of C99 releases the amyloid-beta proteins, amyloid-beta protein 40 and amyloid-beta protein 42, major components of amyloid plaques, and the cytotoxic C-terminal fragments, gamma-CTF(50), gamma-CTF(57) and gamma-CTF(59). PSEN1 cleavage is more efficient with C83 than with C99 as substrate (in vitro). Amyloid-beta protein 40 and Amyloid-beta protein 42 are cleaved by ACE. Many other minor amyloid-beta peptides, amyloid-beta 1-X peptides, are found in cerebral spinal fluid (CSF) including the amyloid-beta X-15 peptides, produced from the cleavage by alpha-secretase.

The protein localises to the cell membrane. It is found in the membrane. Its subcellular location is the perikaryon. It localises to the cell projection. The protein resides in the growth cone. The protein localises to the clathrin-coated pit. It is found in the early endosome. Its subcellular location is the cytoplasmic vesicle. In terms of biological role, functions as a cell surface receptor and performs physiological functions on the surface of neurons relevant to neurite growth, neuronal adhesion and axonogenesis. Interaction between APP molecules on neighboring cells promotes synaptogenesis. Involved in cell mobility and transcription regulation through protein-protein interactions. Can promote transcription activation through binding to APBB1-KAT5 and inhibit Notch signaling through interaction with Numb. Couples to apoptosis-inducing pathways such as those mediated by G(o) and JIP. Inhibits G(o)-alpha ATPase activity. Acts as a kinesin I membrane receptor, mediating the axonal transport of beta-secretase and presenilin 1. May be involved in copper homeostasis/oxidative stress through copper ion reduction. In vitro, copper-metallated APP induces neuronal death directly or is potentiated through Cu(2+)-mediated low-density lipoprotein oxidation. Can regulate neurite outgrowth through binding to components of the extracellular matrix such as heparin and collagen I and IV. Induces a AGER-dependent pathway that involves activation of p38 MAPK, resulting in internalization of amyloid-beta peptide and mitochondrial dysfunction in cultured cortical neurons. Provides Cu(2+) ions for GPC1 which are required for release of nitric oxide (NO) and subsequent degradation of the heparan sulfate chains on GPC1. In Felis catus (Cat), this protein is Amyloid-beta precursor protein.